A 330-amino-acid chain; its full sequence is Ketol-acid reductoisomerase (NADP(+)) (330 aa).

A KARI N-terminal Rossmann domain is found at 1-181; the sequence is MNAYYEQDAD…GGTKAGVIET (181 aa). Residues 24–27, Arg47, Ser50, Ser52, and 82–85 each bind NADP(+); these read YGSQ and DQYQ. The active site involves His107. NADP(+) is bound at residue Gly133. Residues 182 to 327 enclose the KARI C-terminal knotted domain; the sequence is TFKNETETDL…SKLRDMMSWL (146 aa). Residues Asp190, Glu194, Glu226, and Glu230 each contribute to the Mg(2+) site. Residue Ser251 participates in substrate binding.

This sequence belongs to the ketol-acid reductoisomerase family. It depends on Mg(2+) as a cofactor.

It catalyses the reaction (2R)-2,3-dihydroxy-3-methylbutanoate + NADP(+) = (2S)-2-acetolactate + NADPH + H(+). The catalysed reaction is (2R,3R)-2,3-dihydroxy-3-methylpentanoate + NADP(+) = (S)-2-ethyl-2-hydroxy-3-oxobutanoate + NADPH + H(+). It functions in the pathway amino-acid biosynthesis; L-isoleucine biosynthesis; L-isoleucine from 2-oxobutanoate: step 2/4. The protein operates within amino-acid biosynthesis; L-valine biosynthesis; L-valine from pyruvate: step 2/4. In terms of biological role, involved in the biosynthesis of branched-chain amino acids (BCAA). Catalyzes an alkyl-migration followed by a ketol-acid reduction of (S)-2-acetolactate (S2AL) to yield (R)-2,3-dihydroxy-isovalerate. In the isomerase reaction, S2AL is rearranged via a Mg-dependent methyl migration to produce 3-hydroxy-3-methyl-2-ketobutyrate (HMKB). In the reductase reaction, this 2-ketoacid undergoes a metal-dependent reduction by NADPH to yield (R)-2,3-dihydroxy-isovalerate. The protein is Ketol-acid reductoisomerase (NADP(+)) of Chlorobium limicola (strain DSM 245 / NBRC 103803 / 6330).